A 347-amino-acid polypeptide reads, in one-letter code: Photosystem II protein D1 (347 aa).

The next 3 helical transmembrane spans lie at 31-48 (YIGW…LAII), 120-135 (HFIG…EWEF), and 144-158 (WIYL…AATA). Position 120 (H120) interacts with chlorophyll a. W128 is a pheophytin a binding site. [CaMn4O5] cluster-binding residues include D172 and E191. A helical transmembrane segment spans residues 199–220 (FHILGVAGVFGGSLFSAMHGSL). H200 is a chlorophyll a binding site. Residues H217 and 266-267 (SF) each bind a quinone. H217 provides a ligand contact to Fe cation. Residue H274 coordinates Fe cation. A helical membrane pass occupies residues 276–290 (FLAAWPVIGIWFTAL). 3 residues coordinate [CaMn4O5] cluster: H334, E335, and D344.

This sequence belongs to the reaction center PufL/M/PsbA/D family. In terms of assembly, PSII is composed of 1 copy each of membrane proteins PsbA, PsbB, PsbC, PsbD, PsbE, PsbF, PsbH, PsbI, PsbJ, PsbK, PsbL, PsbM, PsbT, PsbX, PsbY, PsbZ, Psb30/Ycf12, at least 3 peripheral proteins of the oxygen-evolving complex and a large number of cofactors. It forms dimeric complexes. Requires The D1/D2 heterodimer binds P680, chlorophylls that are the primary electron donor of PSII, and subsequent electron acceptors. It shares a non-heme iron and each subunit binds pheophytin, quinone, additional chlorophylls, carotenoids and lipids. D1 provides most of the ligands for the Mn4-Ca-O5 cluster of the oxygen-evolving complex (OEC). There is also a Cl(-1) ion associated with D1 and D2, which is required for oxygen evolution. The PSII complex binds additional chlorophylls, carotenoids and specific lipids. as cofactor. Post-translationally, tyr-163 forms a radical intermediate that is referred to as redox-active TyrZ, YZ or Y-Z.

It is found in the plastid. The protein resides in the chloroplast thylakoid membrane. The enzyme catalyses 2 a plastoquinone + 4 hnu + 2 H2O = 2 a plastoquinol + O2. Photosystem II (PSII) is a light-driven water:plastoquinone oxidoreductase that uses light energy to abstract electrons from H(2)O, generating O(2) and a proton gradient subsequently used for ATP formation. It consists of a core antenna complex that captures photons, and an electron transfer chain that converts photonic excitation into a charge separation. The D1/D2 (PsbA/PsbD) reaction center heterodimer binds P680, the primary electron donor of PSII as well as several subsequent electron acceptors. The polypeptide is Photosystem II protein D1 (Alexandrium tamarense (Red tide dinoflagellate)).